Consider the following 405-residue polypeptide: Tyrosine--tRNA ligase (405 aa).

Positions 48–57 match the 'HIGH' region motif; the sequence is PSRPDLHLGH. Residues 232-236 carry the 'KMSKS' region motif; sequence KMSKS. Lysine 235 is an ATP binding site. Residues 339-400 enclose the S4 RNA-binding domain; the sequence is LPLVDLLTTL…AGKRKFFRIA (62 aa).

It belongs to the class-I aminoacyl-tRNA synthetase family. TyrS type 2 subfamily. As to quaternary structure, homodimer.

It is found in the cytoplasm. The catalysed reaction is tRNA(Tyr) + L-tyrosine + ATP = L-tyrosyl-tRNA(Tyr) + AMP + diphosphate + H(+). Functionally, catalyzes the attachment of tyrosine to tRNA(Tyr) in a two-step reaction: tyrosine is first activated by ATP to form Tyr-AMP and then transferred to the acceptor end of tRNA(Tyr). The polypeptide is Tyrosine--tRNA ligase (Chlorobium luteolum (strain DSM 273 / BCRC 81028 / 2530) (Pelodictyon luteolum)).